A 376-amino-acid chain; its full sequence is Ribonucleoside-diphosphate reductase 1 subunit beta (376 aa).

Fe cation-binding residues include Asp-85, Glu-116, and His-119. Residue Tyr-123 is part of the active site. Fe cation-binding residues include Glu-205, Glu-239, and His-242.

This sequence belongs to the ribonucleoside diphosphate reductase small chain family. As to quaternary structure, tetramer of two alpha (R1) and two beta (R2) subunits. The B1 protein is a dimer of alpha subunits. A radical transfer pathway occurs between Tyr-123 of R2 and R1. It depends on Fe cation as a cofactor.

It carries out the reaction a 2'-deoxyribonucleoside 5'-diphosphate + [thioredoxin]-disulfide + H2O = a ribonucleoside 5'-diphosphate + [thioredoxin]-dithiol. Its function is as follows. Provides the precursors necessary for DNA synthesis. Catalyzes the biosynthesis of deoxyribonucleotides from the corresponding ribonucleotides. R2 contains the tyrosyl radical required for catalysis. The protein is Ribonucleoside-diphosphate reductase 1 subunit beta (nrdB) of Escherichia coli O157:H7.